A 484-amino-acid chain; its full sequence is MDSVIQKRIFVGNIFHNADDCYSELLDRFGKFGDCQDFQFEKHNHFAFIDIRFNDEADFNKLRKSFNNVKFKGNILKVDEAKPNWESTWAVQHAKDLKEDIILNAKMKKKNWQHYKKMENVAKSWKDHKEVIAGRMREAPRKRSQLRNITFRINVNGSLKVYKCYKTKLWGYERNKELNDLVYKFTNNFWKNGYNHIVDRLDYSRAVKTVRFKNGLKQLTVSKDENVCSGEMDSDENMSEEEKEKNNVILNDLLKDFDFDKPMTLNDSDEELLTEQRKGEEEEEEEEEKEVNAPEYENVNKTKDQSTLPQEKPEERKEQDEGDGQEDNEFIPTFTKEIGQGTISNTETLRNLFNPNEAEPVSQFKLIEDSDNDIDHAKDVDVNQLEEEVSKSSDTLGLTSAPVPHVSRDKDNKNFLFFPHLQSPFLVGQTQLSKVRAPGRETMLSNWDEEFWANRGNWTRDMRRKMKDALKHRKRKQSKSGLLL.

Residues 7 to 83 form the RRM domain; the sequence is KRIFVGNIFH…NILKVDEAKP (77 aa). Phosphoserine is present on residues Ser234, Ser239, and Ser268. The interval 260 to 330 is disordered; the sequence is DKPMTLNDSD…EGDGQEDNEF (71 aa). Residues 320–329 are compositionally biased toward acidic residues; that stretch reads DEGDGQEDNE. Residue Ser370 is modified to Phosphoserine.

Interacts with NIP7 and RRP43. Together with DBP6, URB1, URB2 and RSA3, forms an RNA-independent complex, which is required during early maturation of nascent 60S ribosomal subunits.

The protein localises to the nucleus. The protein resides in the nucleolus. Required for 60S ribosomal subunit synthesis. May be involved in assembly reactions occurring within late pre-ribosomal particles. This chain is 60S ribosome subunit biogenesis protein NOP8 (NOP8), found in Saccharomyces cerevisiae (strain ATCC 204508 / S288c) (Baker's yeast).